Reading from the N-terminus, the 446-residue chain is Calcium-binding and coiled-coil domain-containing protein 2 (446 aa).

Positions 133–136 (ILVV) match the CLIR motif. The stretch at 137-349 (TTQGEVEEIE…RENSRLLSYM (213 aa)) forms a coiled coil. The LIR-like signature appears at 203–206 (DYWE). Residues 362 to 390 (TSDEGGARQNPGLAYGNPYSGIQESSSPS) are disordered. The interval 371-381 (NPGLAYGNPYS) is interaction with LGALS8. Residues 381 to 390 (SGIQESSSPS) show a composition bias toward polar residues. The tract at residues 395–446 (KKCPICKADDICDHTLEQQQMQPLCFNCPICDKIFPATEKQIFEDHVFCHSL) is interaction with MYO6. A UBZ1-type zinc finger spans residues 419–444 (CFNCPICDKIFPATEKQIFEDHVFCH). Residues Cys-422, Cys-425, His-440, and His-444 each coordinate Zn(2+). Ser-445 is subject to Phosphoserine.

Belongs to the CALCOCO family. Dimer. Part of a complex consisting of CALCOCO2, TAX1BP1 and MYO6. Interacts with MYO6. Interacts with GEMIN4. Interacts with ATG8 family members MAP1LC3A, MAP1LC3B, GABARAP, GABARAPL1 and GABARAPL2. Interacts with ATG8 family member MAP1LC3C. Interacts with LGALS8. Interacts with TOM1; the interaction is indirect and is mediated by MYO6, which acts as a bridge between TOM1 and CALCOCO2. Interacts with AZI2. In terms of assembly, (Microbial infection) Interacts with Lassa virus protein Z. As to quaternary structure, (Microbial infection) Interacts with Mopeia virus protein Z. (Microbial infection) Cleaved by S.pyogenes SpeB protease; leading to its degradation. Degradation by SpeB prevents autophagy, promoting to S.pyogenes intracellular replication. In terms of tissue distribution, expressed in all tissues tested with highest expression in skeletal muscle and lowest in brain.

The protein localises to the cytoplasm. Its subcellular location is the perinuclear region. It localises to the cytoskeleton. It is found in the cytoplasmic vesicle. The protein resides in the autophagosome membrane. Xenophagy-specific receptor required for autophagy-mediated intracellular bacteria degradation. Acts as an effector protein of galectin-sensed membrane damage that restricts the proliferation of infecting pathogens such as Salmonella typhimurium upon entry into the cytosol by targeting LGALS8-associated bacteria for autophagy. Initially orchestrates bacteria targeting to autophagosomes and subsequently ensures pathogen degradation by regulating pathogen-containing autophagosome maturation. Bacteria targeting to autophagosomes relies on its interaction with MAP1LC3A, MAP1LC3B and/or GABARAPL2, whereas regulation of pathogen-containing autophagosome maturation requires the interaction with MAP3LC3C. May play a role in ruffle formation and actin cytoskeleton organization and seems to negatively regulate constitutive secretion. The protein is Calcium-binding and coiled-coil domain-containing protein 2 (CALCOCO2) of Homo sapiens (Human).